The sequence spans 630 residues: Subtilisin-like protease 1 (630 aa).

The signal sequence occupies residues 1-25 (MVLTRRAALLLCPWVIQLVIKRTLA). Residues 26-202 (GDILPNEGKK…IESDKLVGAD (177 aa)) constitute a propeptide, inhibition peptide. The tract at residues 72-125 (NAYNPDRDAPKEELQKLQDQQETPSKQPNNLRNSPQKRAEKKESPGKNKKSLRL) is disordered. The span at 76-87 (PDRDAPKEELQK) shows a compositional bias: basic and acidic residues. The span at 94–107 (TPSKQPNNLRNSPQ) shows a compositional bias: polar residues. Residues 108 to 117 (KRAEKKESPG) show a composition bias toward basic and acidic residues. Ca(2+)-binding residues include Glu-129, Asn-130, Thr-133, Pro-135, and Gly-190. The interval 230 to 254 (LEVPSGESPPSHAASSGSPFDDDDD) is disordered. Low complexity predominate over residues 233–248 (PSGESPPSHAASSGSP). Asp-281 contacts Ca(2+). A Peptidase S8 domain is found at 287 to 604 (QWGLDLARLD…GGYVDILRAV (318 aa)). 3 cysteine pairs are disulfide-bonded: Cys-313-Cys-423, Cys-402-Cys-419, and Cys-465-Cys-478. The active-site Charge relay system is the Asp-316. Residues Asp-325, Glu-336, Arg-340, Val-343, Asp-344, Asp-345, Asp-346, Asn-348, Val-350, Asp-352, and Asp-353 each coordinate Ca(2+). His-372 serves as the catalytic Charge relay system. Residues Val-383, Asn-386, Ile-388, and Ile-390 each contribute to the Ca(2+) site. N-linked (GlcNAc...) asparagine glycosylation is present at Asn-546. The active-site Charge relay system is the Ser-549.

This sequence belongs to the peptidase S8 family. As to quaternary structure, heterodimer between p54 form and prodomain p31; the interaction inhibits p54 catalytic activity. Heterodimer p31-p54 is monomeric at basic pH and dimeric at acidic pH; dimerization is driven by the N-terminal prodomain (p31). Ca(2+) serves as cofactor. In terms of processing, the prodomain (p31) is cleaved, probably by autocatalysis, and remains non-covalently associated with the p54 form as an inhibitor. p54 is further cleaved into the p45/p47 forms. The relevance of the N-glycosylation is not clear. In an insect expression system, SUB1 glycosylation appears to affect its processing into the active mature form suggesting that SUB1 may not be N-glycosylated in parasites.

Its subcellular location is the secreted. It localises to the parasitophorous vacuole lumen. It catalyses the reaction Hydrolysis of proteins with broad specificity for peptide bonds, and a preference for a large uncharged residue in P1. Hydrolyzes peptide amides.. With respect to regulation, inhibited by peptidic alpha-ketoamide inhibitors. Inhibited by the alpha-ketoamide nonapeptide JMV5126 (isocaproyl-KITAQ(CO)DDEE-NH2). Inhibited by the alpha-ketoamide peptide MAM-117. Serine protease which plays an essential role in merozoite invasion of and egress from host erythrocytes by processing and activating various merozoite surface and parasitophorous vacuole proteins. In Plasmodium vivax, this protein is Subtilisin-like protease 1.